Here is a 209-residue protein sequence, read N- to C-terminus: MSYNLMLVENDTVLSKAIQEYLIDQGFNVDIALNGLEAFQLANKYKFDLIISDIIMPIIDGYELLEKLRKIDKLAKIPVIFLTAKGMTKDRIKGYNMGCYGYLSKPFDPEELVSLIKNLIYRDSLNSQNLKKQNSDEIPLFQLLYLTPREKSILNLVIDGLTNKEIAVILDTSIRNVEKYVSRLLQKTNTRNRTLLVKYSIKNNLLNKI.

The 117-residue stretch at 4-120 folds into the Response regulatory domain; that stretch reads NLMLVENDTV…ELVSLIKNLI (117 aa). Residue Asp53 is modified to 4-aspartylphosphate. One can recognise an HTH luxR-type domain in the interval 139 to 204; the sequence is PLFQLLYLTP…LLVKYSIKNN (66 aa).

It is found in the plastid. Its subcellular location is the chloroplast. This Porphyra purpurea (Red seaweed) protein is Probable transcriptional regulator ycf29 (ycf29).